We begin with the raw amino-acid sequence, 98 residues long: Elicitin Vex1 (98 aa).

3 cysteine pairs are disulfide-bonded: cysteine 3-cysteine 71, cysteine 27-cysteine 56, and cysteine 51-cysteine 95. Asparagine 92 is a glycosylation site (N-linked (GlcNAc...) asparagine).

This sequence belongs to the elicitin family.

Its subcellular location is the secreted. Functionally, induces local and distal defense responses (incompatible hypersensitive reaction) in plants from the solanaceae and cruciferae families. Elicits leaf necrosis and causes the accumulation of pathogenesis-related proteins. Might interact with the lipidic molecules of the plasma membrane. The polypeptide is Elicitin Vex1 (Phytopythium vexans (Damping-off fungus)).